We begin with the raw amino-acid sequence, 277 residues long: Ribosomal RNA small subunit methyltransferase A (277 aa).

S-adenosyl-L-methionine-binding residues include His20, Leu22, Gly47, Glu71, Asp94, and Asn116.

This sequence belongs to the class I-like SAM-binding methyltransferase superfamily. rRNA adenine N(6)-methyltransferase family. RsmA subfamily.

It localises to the cytoplasm. It carries out the reaction adenosine(1518)/adenosine(1519) in 16S rRNA + 4 S-adenosyl-L-methionine = N(6)-dimethyladenosine(1518)/N(6)-dimethyladenosine(1519) in 16S rRNA + 4 S-adenosyl-L-homocysteine + 4 H(+). In terms of biological role, specifically dimethylates two adjacent adenosines (A1518 and A1519) in the loop of a conserved hairpin near the 3'-end of 16S rRNA in the 30S particle. May play a critical role in biogenesis of 30S subunits. The protein is Ribosomal RNA small subunit methyltransferase A of Burkholderia sp.